The chain runs to 509 residues: Photosystem II CP47 reaction center protein (509 aa).

6 helical membrane passes run 21–36, 101–115, 140–156, 203–218, 237–252, and 457–472; these read AVHLMHTALVAGWAGS, IILSGMCFLAAIWHW, GIHLFLSGLLCFGFGAF, IAAGIFGIFAGIFHLT, VLSSSIAAVFFAAFVT, and NFALLFFFGHLWHGGR.

This sequence belongs to the PsbB/PsbC family. PsbB subfamily. As to quaternary structure, PSII is composed of 1 copy each of membrane proteins PsbA, PsbB, PsbC, PsbD, PsbE, PsbF, PsbH, PsbI, PsbJ, PsbK, PsbL, PsbM, PsbT, PsbX, PsbY, PsbZ, Psb30/Ycf12, at least 3 peripheral proteins of the oxygen-evolving complex and a large number of cofactors. It forms dimeric complexes. It depends on Binds multiple chlorophylls. PSII binds additional chlorophylls, carotenoids and specific lipids. as a cofactor.

The protein resides in the plastid. It is found in the chloroplast thylakoid membrane. One of the components of the core complex of photosystem II (PSII). It binds chlorophyll and helps catalyze the primary light-induced photochemical processes of PSII. PSII is a light-driven water:plastoquinone oxidoreductase, using light energy to abstract electrons from H(2)O, generating O(2) and a proton gradient subsequently used for ATP formation. This Trieres chinensis (Marine centric diatom) protein is Photosystem II CP47 reaction center protein.